Consider the following 360-residue polypeptide: Peptide chain release factor 1 (360 aa).

Gln235 carries the post-translational modification N5-methylglutamine.

The protein belongs to the prokaryotic/mitochondrial release factor family. In terms of processing, methylated by PrmC. Methylation increases the termination efficiency of RF1.

It is found in the cytoplasm. Its function is as follows. Peptide chain release factor 1 directs the termination of translation in response to the peptide chain termination codons UAG and UAA. This chain is Peptide chain release factor 1, found in Burkholderia cenocepacia (strain ATCC BAA-245 / DSM 16553 / LMG 16656 / NCTC 13227 / J2315 / CF5610) (Burkholderia cepacia (strain J2315)).